The following is a 117-amino-acid chain: Large ribosomal subunit protein bL20 (117 aa).

The protein belongs to the bacterial ribosomal protein bL20 family.

In terms of biological role, binds directly to 23S ribosomal RNA and is necessary for the in vitro assembly process of the 50S ribosomal subunit. It is not involved in the protein synthesizing functions of that subunit. The chain is Large ribosomal subunit protein bL20 from Wigglesworthia glossinidia brevipalpis.